The primary structure comprises 84 residues: Cell division topological specificity factor (84 aa).

Belongs to the MinE family.

In terms of biological role, prevents the cell division inhibition by proteins MinC and MinD at internal division sites while permitting inhibition at polar sites. This ensures cell division at the proper site by restricting the formation of a division septum at the midpoint of the long axis of the cell. This chain is Cell division topological specificity factor, found in Cupriavidus taiwanensis (strain DSM 17343 / BCRC 17206 / CCUG 44338 / CIP 107171 / LMG 19424 / R1) (Ralstonia taiwanensis (strain LMG 19424)).